Here is a 444-residue protein sequence, read N- to C-terminus: Tubulin beta-2 chain (444 aa).

Residues Gln11, Glu69, Ser138, Gly142, Thr143, Gly144, Asn204, and Asn226 each contribute to the GTP site. Glu69 contacts Mg(2+).

It belongs to the tubulin family. Dimer of alpha and beta chains. A typical microtubule is a hollow water-filled tube with an outer diameter of 25 nm and an inner diameter of 15 nM. Alpha-beta heterodimers associate head-to-tail to form protofilaments running lengthwise along the microtubule wall with the beta-tubulin subunit facing the microtubule plus end conferring a structural polarity. Microtubules usually have 13 protofilaments but different protofilament numbers can be found in some organisms and specialized cells. Mg(2+) is required as a cofactor.

It localises to the cytoplasm. The protein resides in the cytoskeleton. Functionally, tubulin is the major constituent of microtubules, a cylinder consisting of laterally associated linear protofilaments composed of alpha- and beta-tubulin heterodimers. Microtubules grow by the addition of GTP-tubulin dimers to the microtubule end, where a stabilizing cap forms. Below the cap, tubulin dimers are in GDP-bound state, owing to GTPase activity of alpha-tubulin. This is Tubulin beta-2 chain (TUBB2) from Zea mays (Maize).